A 152-amino-acid chain; its full sequence is MMKKIDVKILDPRVGQQFPLPTYATSGSAGLDLRACLDDAVELAPGATTLLPTGLAIHIADPSLAAVILPRSGLGHKHGVVLGNLVGLIDSDYQGQLMVSVWNRGQQSFIIEPGERIAQMVFVPVVQAEFNLVESFDATDRGEGGFGHSGRK.

Residues 71-73 (RSG), Asn84, 88-90 (LID), and Met98 contribute to the substrate site.

The protein belongs to the dUTPase family. Mg(2+) is required as a cofactor.

It catalyses the reaction dUTP + H2O = dUMP + diphosphate + H(+). Its pathway is pyrimidine metabolism; dUMP biosynthesis; dUMP from dCTP (dUTP route): step 2/2. In terms of biological role, this enzyme is involved in nucleotide metabolism: it produces dUMP, the immediate precursor of thymidine nucleotides and it decreases the intracellular concentration of dUTP so that uracil cannot be incorporated into DNA. The sequence is that of Deoxyuridine 5'-triphosphate nucleotidohydrolase from Klebsiella pneumoniae subsp. pneumoniae (strain ATCC 700721 / MGH 78578).